We begin with the raw amino-acid sequence, 502 residues long: Sodium/proline symporter (502 aa).

At 1–5 (MAIST) the chain is on the periplasmic side. Residues 6-26 (PMLVTFCVYIFGMILIGFIAW) traverse the membrane as a helical segment. The Cytoplasmic portion of the chain corresponds to 27-41 (RSTKNFDDYILGGRS). Hydrophilic regions lie at residues 27 to 66 (RSTK…GLPG) and 88 to 124 (INWK…KSRI). A helical transmembrane segment spans residues 42–62 (LGPFVTALSAGASDMSGWLLM). Residues 63-67 (GLPGA) are Periplasmic-facing. The helical transmembrane segment at 68–88 (VFLSGISESWIAIGLTLGAWI) threads the bilayer. At 89-126 (NWKLVAGRLRVHTEYNNNALTLPDYFTGRFEDKSRILR) the chain is on the cytoplasmic side. Residues 127-147 (IISALVILLFFTIYCASGIVA) form a helical membrane-spanning segment. Residues 148 to 162 (GARLFESTFGMSYET) are Periplasmic-facing. The hydrophilic stretch occupies residues 151 to 162 (LFESTFGMSYET). A helical transmembrane segment spans residues 163–183 (ALWAGAAATILYTFIGGFLAV). At 184–192 (SWTDTVQAS) the chain is on the cytoplasmic side. The segment at 185 to 189 (WTDTV) is hydrophilic. A helical membrane pass occupies residues 193–213 (LMIFALILTPVIVIISVGGFG). Hydrophilic stretches follow at residues 214-231 (DSLE…DMLK), 249-274 (FGQP…RRIS), and 296-319 (FNDH…ELAQ). Topologically, residues 214–234 (DSLEVIKQKSIENVDMLKGLN) are periplasmic. A helical membrane pass occupies residues 235-255 (FVAIISLMGWGLGYFGQPHIL). Residues 256–275 (ARFMAADSHHSIVHARRISM) lie on the Cytoplasmic side of the membrane. A helical transmembrane segment spans residues 276–296 (TWMILCLAGAVAVGFFGIAYF). Residues 297–319 (NDHPALAGAVNQNAERVFIELAQ) lie on the Periplasmic side of the membrane. A helical transmembrane segment spans residues 320–340 (ILFNPWIAGILLSAILAAVMS). Over 341 to 370 (TLSCQLLVCSSAITEDLYKAFLRKHASQKE) the chain is Cytoplasmic. Residues 341–370 (TLSCQLLVCSSAITEDLYKAFLRKHASQKE) form a hydrophilic region. A helical membrane pass occupies residues 371 to 391 (LVWVGRVMVLVVALVAIALAA). Residues 392–397 (NPENRV) lie on the Periplasmic side of the membrane. Residues 392-397 (NPENRV) form a hydrophilic region. A helical membrane pass occupies residues 398-418 (LGLVSYAWAGFGAAFGPVVLF). The Cytoplasmic portion of the chain corresponds to 419–427 (SVMWSRMTR). Hydrophilic stretches follow at residues 424 to 430 (RMTRNGA) and 446 to 448 (QFG). 2 helical membrane passes run 428–448 (NGAL…KQFG) and 449–469 (WLGL…IVVF). Topologically, residues 470-502 (SLLGKAPSAAMQKRFAEADAHYHSAPPSRLQES) are cytoplasmic. Residues 476–502 (PSAAMQKRFAEADAHYHSAPPSRLQES) are hydrophilic.

It belongs to the sodium:solute symporter (SSF) (TC 2.A.21) family. As to quaternary structure, has been isolated from inner membrane preparations as a homodimer.

The protein localises to the cell inner membrane. The catalysed reaction is L-proline(in) + Na(+)(in) = L-proline(out) + Na(+)(out). With respect to regulation, activity is stimulated by phosphatidylethanolamine and phosphatidylglycerol, but not by phosphatidylcholine and cardiolipin. Proline uptake is inhibited by the sulfhydryl reagent N-ethylmaleimide (NEM). Proline, in the presence of Na(+) or Li(+), protects the carrier functions from NEM-inactivation. Its function is as follows. Catalyzes the sodium-dependent uptake of extracellular L-proline. This protein is also capable of using lithium as the transport cation. Also catalyzes the uptake of propionate. In Escherichia coli (strain K12), this protein is Sodium/proline symporter (putP).